The primary structure comprises 129 residues: Follitropin subunit beta (129 aa).

The signal sequence occupies residues 1 to 18; sequence MKSVQFCFLFCCWRAICC. Intrachain disulfides connect cysteine 21–cysteine 69, cysteine 35–cysteine 84, cysteine 38–cysteine 122, cysteine 46–cysteine 100, cysteine 50–cysteine 102, and cysteine 105–cysteine 112. N-linked (GlcNAc...) asparagine glycosylation is found at asparagine 25 and asparagine 42.

It belongs to the glycoprotein hormones subunit beta family. Heterodimer. The active follitropin is a heterodimer composed of an alpha chain/CGA shared with other hormones and a unique beta chain/FSHB shown here.

It is found in the secreted. In terms of biological role, together with the alpha chain CGA constitutes follitropin, the follicle-stimulating hormone, and provides its biological specificity to the hormone heterodimer. Binds FSHR, a G protein-coupled receptor, on target cells to activate downstream signaling pathways. Follitropin is involved in follicle development and spermatogenesis in reproductive organs. The sequence is that of Follitropin subunit beta (FSHB) from Capra hircus (Goat).